The following is a 176-amino-acid chain: Lipoprotein signal peptidase (176 aa).

A run of 3 helical transmembrane segments spans residues 12-32, 67-87, and 94-114; these read WYWVVVLVFIADQVSKQWVLT, WQKWLFTFIAVAFSTILTIWL, and VWRLNLAYTLVIGGALGNLID. Active-site residues include Asp-123 and Asp-141. Residues 133-153 traverse the membrane as a helical segment; the sequence is HFAAFNIADSAICIGAGLIIL.

It belongs to the peptidase A8 family.

The protein resides in the cell inner membrane. The enzyme catalyses Release of signal peptides from bacterial membrane prolipoproteins. Hydrolyzes -Xaa-Yaa-Zaa-|-(S,diacylglyceryl)Cys-, in which Xaa is hydrophobic (preferably Leu), and Yaa (Ala or Ser) and Zaa (Gly or Ala) have small, neutral side chains.. The protein operates within protein modification; lipoprotein biosynthesis (signal peptide cleavage). Functionally, this protein specifically catalyzes the removal of signal peptides from prolipoproteins. This is Lipoprotein signal peptidase from Shewanella sediminis (strain HAW-EB3).